We begin with the raw amino-acid sequence, 349 residues long: MQLTVLASAILALAQGALAIPAKAPALDVTLSQIDNTRVKAVVKNTGAEEVTFVHLNFFRDAAPVKKVSLFRNATEVPFNGIKLRFRNKGLTDDVLTTLAAGATFEDEFDIASTADLTEGGVVTVRSQGVVPLTKDNKVSGYIPFTSNEIELEVDGAKAAAVPAAINLLDRRTKVASCSGSRATALQTALRNTVSLANAAASAAESGSSSRFSEYFKTTSSATRSTVAARLRAVAREAGSTSSGKTTYYCGDPYGYCDPNVLAYTLPSKNIVANCDIYYSDLPALARSCHAQDQATTTLHEFTHAPGVYSPGTDDLGYGYQAATALSTSDALNNADTYALFANAVNLNC.

The signal sequence occupies residues 1-19; it reads MQLTVLASAILALAQGALA. A propeptide spanning residues 20–172 is cleaved from the precursor; that stretch reads IPAKAPALDV…PAAINLLDRR (153 aa). Disulfide bonds link Cys178-Cys250 and Cys257-Cys275. His300 serves as a coordination point for Zn(2+). Residue Glu301 is part of the active site. Zn(2+) contacts are provided by His304 and Asp315.

The protein belongs to the peptidase M35 family. The cofactor is Zn(2+).

Its subcellular location is the secreted. The enzyme catalyses Preferential cleavage of bonds with hydrophobic residues in P1'. Also 3-Asn-|-Gln-4 and 8-Gly-|-Ser-9 bonds in insulin B chain.. Secreted metalloproteinase that allows assimilation of proteinaceous substrates. Shows high activities on basic nuclear substrates such as histone and protamine. The sequence is that of Neutral protease 2 homolog ACLA_052720 from Aspergillus clavatus (strain ATCC 1007 / CBS 513.65 / DSM 816 / NCTC 3887 / NRRL 1 / QM 1276 / 107).